Consider the following 1319-residue polypeptide: MDVDSDVNVSRLRDELHKVANEETDTATFNDDAPSGATCRICRGEATEDNPLFHPCKCRGSIKYMHESCLLEWVASKNIDISKPGADVKCDICHYPIQFKTIYAENMPEKIPFSLLLSKSILTFFEKARLALTIGLAAVLYIIGVPLVWNMFGKLYTMMLDGSSPYPGDFLKSLIYGYDQSATPELTTRAIFYQLLQNHSFTSLQFIMIVILHIALYFQYDMIVREDVFSKMVFHKIGPRLSPKDLKSRLKERFPMMDDRMVEYLAREMRAHDENRQEQGHDRLNMPAAAADNNNNVINPRNDNVPPQDPNDHRNFENLRHVDELDHDEATEEHENNDSDNSLPSGDDSSRILPGSSSDNEEDEEAEGQQQQQQPEEEADYRDHIEPNPIDMWANRRAQNEFDDLIAAQQNAINRPNAPVFIPPPAQNRAGNVDQDEQDFGAAVGVPPAQANPDDQGQGPLVINLKLKLLNVIAYFIIAVVFTAIYLAISYLFPTFIGFGLLKIYFGIFKVILRGLCHLYYLSGAHIAYNGLTKLVPKVDVAMSWISDHLIHDIIYLYNGYTENTMKHSIFIRALPALTTYLTSVSIVCASSNLVSRGYGRENGMSNPTRRLIFQILFALKCTFKVFTLFFIELAGFPILAGVMLDFSLFCPILASNSRMLWVPSICAIWPPFSLFVYWTIGTLYMYWFAKYIGMIRKNIIRPGVLFFIRSPEDPNIKILHDSLIHPMSIQLSRLCLSMFIYAIFIVLGFGFHTRIFFPFMLKSNLLSVPEAYKPTSIISWKFNTILLTLYFTKRILESSSYVKPLLERYWKTIFKLCSRKLRLSSFILGKDTPTERGHIVYRNLFYKYIAAKNAEWSNQELFTKPKTLEQAEELFGQVRDVHAYFVPDGVLMRVPSSDIVSRNYVQTMFVPVTKDDKLLKPLDLERIKERNKRAAGEFGYLDEQNTEYDQYYIVYVPPDFRLRYMTLLGLVWLFASILMLGVTFISQALINFVCSFGFLPVVKLLLGERNKVYVAWKELSDISYSYLNIYYVCVGSVCLSKIAKDILHFTEGQNTLDEHAVDENEVEEVEHDIPERDINNAPVNNINNVEEGQGIFMAIFNSIFDSMLVKYNLMVFIAIMIAVIRTMVSWVVLTDGILACYNYLTIRVFGNSSYTIGNSKWFKYDESLLFVVWIISSMVNFGTGYKSLKLFFRNRNTSKLNFLKTMALELFKQGFLHMVIYVLPIIILSLVFLRDVSTKQIIDISHGSRSFTLSLNESFPTWTRMQDIYFGLLIALESFTFFFQATVLFIQWFKSTVQNVKDEVYTKGRALENLPDES.

Methionine 1 is modified (N-acetylmethionine). The Cytoplasmic portion of the chain corresponds to 1 to 131 (MDVDSDVNVS…LTFFEKARLA (131 aa)). The segment at 31-100 (DDAPSGATCR…DICHYPIQFK (70 aa)) adopts an RING-CH-type zinc-finger fold. Residues cysteine 39, cysteine 42, cysteine 56, cysteine 58, histidine 66, cysteine 69, cysteine 90, and cysteine 93 each coordinate Zn(2+). Residues 132–152 (LTIGLAAVLYIIGVPLVWNMF) traverse the membrane as a helical segment. At 153–203 (GKLYTMMLDGSSPYPGDFLKSLIYGYDQSATPELTTRAIFYQLLQNHSFTS) the chain is on the lumenal side. A helical transmembrane segment spans residues 204-224 (LQFIMIVILHIALYFQYDMIV). Residues 225-468 (REDVFSKMVF…GPLVINLKLK (244 aa)) lie on the Cytoplasmic side of the membrane. Positions 291-306 (ADNNNNVINPRNDNVP) are enriched in low complexity. Disordered regions lie at residues 291-315 (ADNN…DHRN) and 329-381 (EATE…EADY). A helical transmembrane segment spans residues 469 to 489 (LLNVIAYFIIAVVFTAIYLAI). Residues 490-491 (SY) are Lumenal-facing. The chain crosses the membrane as a helical span at residues 492 to 512 (LFPTFIGFGLLKIYFGIFKVI). The Cytoplasmic portion of the chain corresponds to 513 to 626 (LRGLCHLYYL…LFALKCTFKV (114 aa)). A helical transmembrane segment spans residues 627-647 (FTLFFIELAGFPILAGVMLDF). Topologically, residues 648–660 (SLFCPILASNSRM) are lumenal. Residues 661–681 (LWVPSICAIWPPFSLFVYWTI) traverse the membrane as a helical segment. The Cytoplasmic portion of the chain corresponds to 682 to 739 (GTLYMYWFAKYIGMIRKNIIRPGVLFFIRSPEDPNIKILHDSLIHPMSIQLSRLCLSM). A helical transmembrane segment spans residues 740-760 (FIYAIFIVLGFGFHTRIFFPF). Over 761-777 (MLKSNLLSVPEAYKPTS) the chain is Lumenal. A helical transmembrane segment spans residues 778–797 (IISWKFNTILLTLYFTKRIL). Topologically, residues 798–965 (ESSSYVKPLL…YVPPDFRLRY (168 aa)) are cytoplasmic. Residues 966-986 (MTLLGLVWLFASILMLGVTFI) traverse the membrane as a helical segment. The Lumenal segment spans residues 987–1019 (SQALINFVCSFGFLPVVKLLLGERNKVYVAWKE). A helical transmembrane segment spans residues 1020–1040 (LSDISYSYLNIYYVCVGSVCL). The Cytoplasmic portion of the chain corresponds to 1041 to 1113 (SKIAKDILHF…IFDSMLVKYN (73 aa)). Residues 1114-1134 (LMVFIAIMIAVIRTMVSWVVL) traverse the membrane as a helical segment. Over 1135–1168 (TDGILACYNYLTIRVFGNSSYTIGNSKWFKYDES) the chain is Lumenal. Residues 1169 to 1189 (LLFVVWIISSMVNFGTGYKSL) form a helical membrane-spanning segment. Residues 1190-1213 (KLFFRNRNTSKLNFLKTMALELFK) lie on the Cytoplasmic side of the membrane. The helical transmembrane segment at 1214 to 1234 (QGFLHMVIYVLPIIILSLVFL) threads the bilayer. Topologically, residues 1235-1270 (RDVSTKQIIDISHGSRSFTLSLNESFPTWTRMQDIY) are lumenal. The helical transmembrane segment at 1271 to 1291 (FGLLIALESFTFFFQATVLFI) threads the bilayer. Topologically, residues 1292 to 1319 (QWFKSTVQNVKDEVYTKGRALENLPDES) are cytoplasmic.

The protein belongs to the DOA10/MARCH6 family. Component of the DOA10 ubiquitin ligase complex which contains E3 ligase SSM4/DOA10 and CDC48-binding protein UBX2/SEL1. The DOA10 complex interacts with the heterotrimeric CDC48-NPL4-UFD1 ATPase complex which is recruited by UBX2/SEL1 via its interaction with CDC48. Interacts with its associated ubiquitin conjugating enzymes UBC6 and UBC7 with its membrane anchor CUE1. Interacts with PEX29.

It localises to the endoplasmic reticulum membrane. The protein resides in the nucleus inner membrane. The enzyme catalyses S-ubiquitinyl-[E2 ubiquitin-conjugating enzyme]-L-cysteine + [acceptor protein]-L-lysine = [E2 ubiquitin-conjugating enzyme]-L-cysteine + N(6)-ubiquitinyl-[acceptor protein]-L-lysine.. It participates in protein modification; protein ubiquitination. In terms of biological role, E3 ubiquitin-protein ligase which accepts ubiquitin specifically from endoplasmic reticulum-associated UBC6 and UBC7 E2 ligases, and transfers it to substrates promoting their degradation. Mediates the degradation of a broad range of substrates, including endoplasmic reticulum membrane proteins (ERQC), soluble nuclear proteins and soluble cytoplasmic proteins (CytoQC). Component of the DOA10 ubiquitin ligase complex, which is part of the ERAD-C pathway responsible for the rapid degradation of membrane proteins with misfolded cytoplasmic domains. ERAD-C substrates are ubiquitinated through DOA10 in conjunction with the E2 ubiquitin-conjugating enzymes UBC6 and UBC7-CUE1. Ubiquitinated substrates are then removed to the cytosol via the action of the UFD1-NPL4-CDC48/p97 (UNC) AAA ATPase complex and targeted to the proteasome. Also recognizes the N-terminally acetylated residue of proteins as degradation signal (degron). N-terminally acetylated target proteins include MATALPHA2, TBF1, SLK19, YMR090W, HIS3, HSP104, UBP6 and ARO8. Catalyzes ubiquitination of mislocalized tail-anchored proteins that are extracted from the mitochondrion membrane by MSP1: following extraction, mistargeted proteins are transferred to the endoplasmic reticulum, where they are ubiquitinated by DOA10 and degraded by the proteasome. The protein is ERAD-associated E3 ubiquitin-protein ligase DOA10 (SSM4) of Saccharomyces cerevisiae (strain ATCC 204508 / S288c) (Baker's yeast).